The primary structure comprises 1048 residues: Malignant fibrous histiocytoma-amplified sequence 1 homolog (1048 aa).

Ala2 is modified (N-acetylalanine). LRR repeat units lie at residues 60 to 81, 84 to 105, 108 to 129, 132 to 153, 155 to 176, 178 to 199, 201 to 222, 224 to 246, 247 to 268, 270 to 292, 293 to 314, 316 to 337, and 339 to 360; these read DIEVLNLGNNGLEDVPEGLGSA, SLRVLVLRRNRFARLPPAVAEL, HLTELDVSHNRLTILGAEVVSA, ELRKLNLSHNQLPALPAQLGAL, HLEELDVSFNRLAHLPDSFSCL, HLRTLDVDHNQLTAFPQQLLQL, ALEELDVSSNRLRGLPEDISAL, ALKILWLSGAELGTLPRGFCELA, SLESLMLDNNGLQALPDEFSRL, RLKMLNLSSNLFEEFPAALLPLA, GLEELYLSRNQLTSVPSLIAGL, RLLTLWLDNNRIRYLPDSIVEL, and GLEELVLQGNQIAVLPDNFGQL. The required for interaction with PJA2 stretch occupies residues 60-360; that stretch reads DIEVLNLGNN…AVLPDNFGQL (301 aa). A required for interaction with PPP2R2A region spans residues 60–645; the sequence is DIEVLNLGNN…DKLLSVAEHR (586 aa). In terms of domain architecture, Roc spans 399 to 645; sequence QPAVQPRLKL…DKLLSVAEHR (247 aa). Lys597 bears the N6-acetyllysine mark.

Interacts with RAF1. Interacts with HSPD1. Interacts with PPP2CA; retains PPP2CA into the cytoplasm and excludes it from the nucleus. Interacts with PPP2R2A; the interaction is direct. Interacts with PJA2. Ubiquitinated. Ubiquitination by PJA2 does not lead MFHAS1 to proteasomal degradation but positively regulates its function in polarization of macrophages.

Its subcellular location is the cytoplasm. Probable GTP-binding protein. Functions in innate immunity and more specifically the inflammatory response as a regulator of the Toll-like receptor TLR2 and TLR4 signaling pathways. Negatively regulates the part of the TLR4 signaling pathway that leads to the activation of the transcription factor AP-1. By retaining the phosphatase complex PP2A into the cytoplasm, prevents the dephosphorylation of the AP-1 subunit JUN which is required for proper activation of the transcription factor. Both inhibits and activates the TLR2-dependent signaling pathway. Positively regulates the TLR2 signaling pathway to activate specifically the downstream p38 and JNK MAP kinases and promote the polarization of macrophages toward the pro-inflammatory M1 phenotype. It may also play a role in the regulation of inflammation induced by high glucose through the PKB/AKT signaling pathway. Also involved in erythrocyte differentiation through activation of the ERK1/ERK2 signaling pathway. In Mus musculus (Mouse), this protein is Malignant fibrous histiocytoma-amplified sequence 1 homolog.